Here is a 279-residue protein sequence, read N- to C-terminus: MAGAVATVSVGLAWLGLMAAAASATQFRVGGGRGWSVPDANAEPYNSWAGRMRFQIGDQLLFVYPKEMDAVVVVDQGAYDACNTSSSVAGGGGGRYDDGNTVFTFDRSGPFFFISGNEANCRAGEKLVVVVMADRGGRHAPPPSPPAVPPPVAPVPMPSPASSPPSPAPAAATPSLAPSPVATTPSPSPSVSPMAPAPAPTTSTPSSPPAPAAMAPSPSTTPGGVAQPPPPPGTDGANATTPAAPAANDRSGAAAAAPVVAGVVVTSLGAYIGYAMLAI.

An N-terminal signal peptide occupies residues Met1–Ala24. The region spanning Thr25–Ala133 is the Phytocyanin domain. Cys82 and Cys121 form a disulfide bridge. A glycan (N-linked (GlcNAc...) asparagine) is linked at Asn83. Positions Arg138–Ala256 are disordered. Residues Ala140–Ala168 are compositionally biased toward pro residues. Residues Pro169 to Pro185 are compositionally biased toward low complexity. Residues Ser186–Ala199 are compositionally biased toward pro residues. Composition is skewed to low complexity over residues Ala212–Ala226 and Thr234–Ala256. N-linked (GlcNAc...) asparagine glycosylation is present at Asn238. Ser251 is lipidated: GPI-anchor amidated serine. A propeptide spans Gly252–Ile279 (removed in mature form).

This sequence belongs to the early nodulin-like (ENODL) family. Specifically expressed in reproductive tissues. Mainly observed in developing seeds and in mature leaves.

It is found in the cell membrane. May act as a carbohydrate transporter. Promotes tolerance to salt stress in a redox-dependent manner. The polypeptide is Early nodulin-like protein 18 (Oryza sativa subsp. japonica (Rice)).